Here is a 419-residue protein sequence, read N- to C-terminus: Gamma-glutamyl phosphate reductase (419 aa).

It belongs to the gamma-glutamyl phosphate reductase family.

It localises to the cytoplasm. The catalysed reaction is L-glutamate 5-semialdehyde + phosphate + NADP(+) = L-glutamyl 5-phosphate + NADPH + H(+). It functions in the pathway amino-acid biosynthesis; L-proline biosynthesis; L-glutamate 5-semialdehyde from L-glutamate: step 2/2. In terms of biological role, catalyzes the NADPH-dependent reduction of L-glutamate 5-phosphate into L-glutamate 5-semialdehyde and phosphate. The product spontaneously undergoes cyclization to form 1-pyrroline-5-carboxylate. The sequence is that of Gamma-glutamyl phosphate reductase from Caldicellulosiruptor bescii (strain ATCC BAA-1888 / DSM 6725 / KCTC 15123 / Z-1320) (Anaerocellum thermophilum).